The following is a 293-amino-acid chain: Glycine betaine-binding protein OpuAC (293 aa).

The signal sequence occupies residues 1–20; sequence MLKKIIGIGVSAMLALSLAA. Cys21 is lipidated: N-palmitoyl cysteine. Cys21 carries the S-diacylglycerol cysteine lipid modification.

In terms of assembly, the complex is composed of two ATP-binding proteins (OpuAA), two transmembrane proteins (OpuAB) and a solute-binding protein (OpuAC). Interacts with FloT.

Its subcellular location is the cell membrane. The protein localises to the membrane raft. Functionally, involved in a multicomponent binding-protein-dependent transport system for glycine betaine. This is Glycine betaine-binding protein OpuAC (opuAC) from Bacillus subtilis (strain 168).